A 181-amino-acid chain; its full sequence is Malignant T-cell-amplified sequence 1 (181 aa).

Thr-81 carries the post-translational modification Phosphothreonine; by MAPK1 and MAPK3. In terms of domain architecture, PUA spans 92–171 (LPHQQVDKGA…IGIENIHYLN (80 aa)). Residue Ser-118 is modified to Phosphoserine; by CDK1.

This sequence belongs to the MCTS1 family. As to quaternary structure, interacts (via PUA domain) with DENR; the complex regulates translation reinitiation. In terms of processing, phosphorylation is critical for stabilization and promotion of cell proliferation. In terms of tissue distribution, ubiquitous. Over-expressed in T-cell lymphoid cell lines and in non-Hodgkin lymphoma cell lines as well as in a subset of primary large B-cell lymphomas.

The protein resides in the cytoplasm. Its function is as follows. Translation regulator forming a complex with DENR to promote translation reinitiation. Translation reinitiation is the process where the small ribosomal subunit remains attached to the mRNA following termination of translation of a regulatory upstream ORF (uORF), and resume scanning on the same mRNA molecule to initiate translation of a downstream ORF, usually the main ORF (mORF). The MCTS1/DENR complex is pivotal to two linked mechanisms essential for translation reinitiation. Firstly, the dissociation of deacylated tRNAs from post-termination 40S ribosomal complexes during ribosome recycling. Secondly, the recruitment in an EIF2-independent manner of aminoacylated initiator tRNA to P site of 40S ribosomes for a new round of translation. This regulatory mechanism governs the translation of more than 150 genes which translation reinitiation is MCTS1/DENR complex-dependent. Consequently, modulates various unrelated biological processes including cell cycle regulation and DNA damage signaling and repair. Notably, it positively regulates interferon gamma immunity to mycobacteria by enhancing the translation of JAK2. This chain is Malignant T-cell-amplified sequence 1 (MCTS1), found in Homo sapiens (Human).